An 820-amino-acid chain; its full sequence is Leucine--tRNA ligase (820 aa).

The 'HIGH' region motif lies at 42 to 52; it reads PYPSGDLHMGH. A 'KMSKS' region motif is present at residues 576–580; that stretch reads KMSKS. ATP is bound at residue Lys-579.

The protein belongs to the class-I aminoacyl-tRNA synthetase family.

The protein resides in the cytoplasm. The enzyme catalyses tRNA(Leu) + L-leucine + ATP = L-leucyl-tRNA(Leu) + AMP + diphosphate. This Coxiella burnetii (strain CbuG_Q212) (Coxiella burnetii (strain Q212)) protein is Leucine--tRNA ligase.